The chain runs to 1637 residues: Endoribonuclease Dicer homolog 3b (1637 aa).

Residues 1 to 40 (MADDEAAVLPPPPPLPPPCRPHRQLRPRGSRPTADTTPRT) are disordered. Positions 9 to 19 (LPPPPPLPPPC) are enriched in pro residues. Residues 20-29 (RPHRQLRPRG) show a composition bias toward basic residues. One can recognise a Helicase ATP-binding domain in the interval 46–222 (VFEAALRGNT…LHNCEAHISQ (177 aa)). 59 to 66 (LDTGSGKT) lines the ATP pocket. The short motif at 169 to 172 (DECH) is the DECH box element. The 153-residue stretch at 404-556 (SFGSSNEVLC…ALYRHPNALS (153 aa)) folds into the Helicase C-terminal domain. One can recognise a Dicer dsRNA-binding fold domain in the interval 581–671 (CVNLIRKYCE…VPLTEEPMDT (91 aa)). In terms of domain architecture, PAZ spans 882 to 1006 (EIIHLANKSL…VPPELLIHLD (125 aa)). Residues 1031–1200 (ASQLRREIGY…LVGAYYVGGG (170 aa)) form the RNase III 1 domain. Mg(2+)-binding residues include D1214, D1309, and S1312. The RNase III 2 domain maps to 1241 to 1389 (IEELEAKLKY…IAGAVFIDTD (149 aa)). 2 consecutive DRBM domains span residues 1412-1481 (LALP…DLKQ) and 1545-1629 (GPRS…KLQE).

Belongs to the helicase family. Dicer subfamily. In terms of assembly, may interact with ARGONAUTE1 or PINHEAD through their common PAZ domains. Requires Mg(2+) as cofactor. Mn(2+) serves as cofactor.

The protein resides in the nucleus. In terms of biological role, probably involved in the RNA silencing pathway. May cleave double-stranded RNA to produce short 21-24 nucleotides (nt) RNAs which target the selective destruction of complementary RNAs. The polypeptide is Endoribonuclease Dicer homolog 3b (DCL3B) (Oryza sativa subsp. japonica (Rice)).